A 242-amino-acid chain; its full sequence is Triosephosphate isomerase (242 aa).

Substrate is bound at residue 9–11; sequence NWK. His90 functions as the Electrophile in the catalytic mechanism. Residue Glu162 is the Proton acceptor of the active site. Residues Gly168, Ser205, and 226–227 each bind substrate; that span reads GG.

Belongs to the triosephosphate isomerase family. In terms of assembly, homodimer.

It localises to the cytoplasm. It carries out the reaction D-glyceraldehyde 3-phosphate = dihydroxyacetone phosphate. Its pathway is carbohydrate biosynthesis; gluconeogenesis. It participates in carbohydrate degradation; glycolysis; D-glyceraldehyde 3-phosphate from glycerone phosphate: step 1/1. Its function is as follows. Involved in the gluconeogenesis. Catalyzes stereospecifically the conversion of dihydroxyacetone phosphate (DHAP) to D-glyceraldehyde-3-phosphate (G3P). The polypeptide is Triosephosphate isomerase (Azoarcus sp. (strain BH72)).